The chain runs to 129 residues: Fluoride-specific ion channel FluC (129 aa).

The next 4 helical transmembrane spans lie at 10-30 (LLVG…ALAF), 35-55 (PGFP…IGFL), 71-91 (LFLV…MFEG), and 105-125 (LYLA…IIAA). Na(+)-binding residues include Gly79 and Thr82.

This sequence belongs to the fluoride channel Fluc/FEX (TC 1.A.43) family.

The protein resides in the cell inner membrane. It carries out the reaction fluoride(in) = fluoride(out). With respect to regulation, na(+) is not transported, but it plays an essential structural role and its presence is essential for fluoride channel function. In terms of biological role, fluoride-specific ion channel. Important for reducing fluoride concentration in the cell, thus reducing its toxicity. This chain is Fluoride-specific ion channel FluC, found in Chlorobium luteolum (strain DSM 273 / BCRC 81028 / 2530) (Pelodictyon luteolum).